A 265-amino-acid chain; its full sequence is tRNA (guanine-N(1)-)-methyltransferase (265 aa).

S-adenosyl-L-methionine is bound by residues G119 and 139–144; that span reads IGDYVL.

This sequence belongs to the RNA methyltransferase TrmD family. In terms of assembly, homodimer.

It localises to the cytoplasm. It catalyses the reaction guanosine(37) in tRNA + S-adenosyl-L-methionine = N(1)-methylguanosine(37) in tRNA + S-adenosyl-L-homocysteine + H(+). Specifically methylates guanosine-37 in various tRNAs. The protein is tRNA (guanine-N(1)-)-methyltransferase of Alcanivorax borkumensis (strain ATCC 700651 / DSM 11573 / NCIMB 13689 / SK2).